Reading from the N-terminus, the 135-residue chain is Interleukin-4 (135 aa).

Positions 1-24 (MGLTSQLIPALVCLLVCTSHFVHG) are cleaved as a signal peptide. Intrachain disulfides connect C48–C85 and C70–C105. Residues N62 and N96 are each glycosylated (N-linked (GlcNAc...) asparagine).

This sequence belongs to the IL-4/IL-13 family.

The protein resides in the secreted. In terms of biological role, participates in at least several B-cell activation processes as well as of other cell types. It is a costimulator of DNA-synthesis. It induces the expression of class II MHC molecules on resting B-cells. It enhances both secretion and cell surface expression of IgE and IgG1. It also regulates the expression of the low affinity Fc receptor for IgE (CD23) on both lymphocytes and monocytes. Positively regulates IL31RA expression in macrophages. Stimulates autophagy in dendritic cells by interfering with mTORC1 signaling and through the induction of RUFY4. The protein is Interleukin-4 (IL4) of Ovis aries (Sheep).